The chain runs to 190 residues: NADH dehydrogenase [ubiquinone] iron-sulfur protein 3 (190 aa).

This sequence belongs to the complex I 30 kDa subunit family. In terms of assembly, complex I is composed of about 45 different subunits. This is a component of the iron-sulfur (IP) fragment of the enzyme.

The protein resides in the mitochondrion inner membrane. The enzyme catalyses a ubiquinone + NADH + 5 H(+)(in) = a ubiquinol + NAD(+) + 4 H(+)(out). Its function is as follows. Core subunit of the mitochondrial membrane respiratory chain NADH dehydrogenase (Complex I) that is believed to belong to the minimal assembly required for catalysis. Complex I functions in the transfer of electrons from NADH to the respiratory chain. The immediate electron acceptor for the enzyme is believed to be ubiquinone. The sequence is that of NADH dehydrogenase [ubiquinone] iron-sulfur protein 3 (NAD9) from Solanum tuberosum (Potato).